The sequence spans 842 residues: Amyloid-beta A4 precursor protein-binding family A member 1 (842 aa).

Disordered stretches follow at residues 1 to 121 (MNHL…DESA), 238 to 349 (RLHH…EKRD), and 366 to 439 (KTRT…KESR). S82 is subject to Phosphoserine. Basic and acidic residues-rich tracts occupy residues 106–115 (DGYEAERAQD) and 240–258 (HHYD…KEAE). Phosphoserine occurs at positions 246, 250, 252, 267, 284, and 289. The residue at position 309 (T309) is a Phosphothreonine. 2 positions are modified to phosphoserine: S317 and S372. T375 carries the phosphothreonine modification. The segment covering 392–403 (PTRDCDDQRPVD) has biased composition (basic and acidic residues). Positions 404 to 421 (GDSPSPGSSSPLGAESSS) are enriched in low complexity. S406, S408, S413, and S573 each carry phosphoserine. Residues 460-648 (LIDGIIFAAN…LLNTQDMYND (189 aa)) enclose the PID domain. The tract at residues 631–648 (LSQKEYSDLLNTQDMYND) is autoinhibitory helix linker. PDZ domains are found at residues 661-746 (DVFI…NIVR) and 752-828 (TVLI…MPAA).

In terms of assembly, part of a multimeric complex containing STXBP1 and STX1A. Interacts with STXBP1. Component of the brain-specific heterotrimeric complex (LIN-10-LIN-2-LIN-7 complex) composed of at least APBA1, CASK, and LIN7, which associates with the motor protein KIF17 to transport vesicles along microtubules. Within the complex, interacts (via PDZ domain) with the motor protein KIF17; the interaction is direct and is required for association of KIF17 with the cargo that is to be transported. Binds to the cytoplasmic domain of amyloid protein (APP). Interacts (via PDZ 1 and 2 domains) with FSPB. Isoform 3 interacts (via its truncated PID domain) with active, GTP-bound RAB6A. Also interacts with GTP-bound RAB6B. As to expression, isoform 3 is expressed in brain.

The protein localises to the cytoplasm. It localises to the perinuclear region. The protein resides in the nucleus. It is found in the golgi apparatus. Functionally, putative function in synaptic vesicle exocytosis by binding to Munc18-1, an essential component of the synaptic vesicle exocytotic machinery. May modulate processing of the amyloid-beta precursor protein (APP) and hence formation of AAP-beta. Component of the LIN-10-LIN-2-LIN-7 complex, which associates with the motor protein KIF17 to transport vesicles containing N-methyl-D-aspartate (NMDA) receptor subunit NR2B along microtubules. This chain is Amyloid-beta A4 precursor protein-binding family A member 1, found in Mus musculus (Mouse).